The sequence spans 554 residues: Glutamine--tRNA ligase (554 aa).

A 'HIGH' region motif is present at residues 34–44; that stretch reads PEPNGYLHIGH. ATP-binding positions include 35–37 and 41–47; these read EPN and HIGHAKS. L-glutamine is bound by residues aspartate 67 and tyrosine 212. ATP contacts are provided by residues threonine 231, 261–262, and 269–271; these read RL and MSK. The 'KMSKS' region motif lies at 268 to 272; the sequence is VMSKR. Residues 317–324 form an interaction with tRNA region; sequence TKQDNTIE.

Belongs to the class-I aminoacyl-tRNA synthetase family. Monomer.

The protein localises to the cytoplasm. The enzyme catalyses tRNA(Gln) + L-glutamine + ATP = L-glutaminyl-tRNA(Gln) + AMP + diphosphate. In Escherichia coli O157:H7, this protein is Glutamine--tRNA ligase.